Reading from the N-terminus, the 881-residue chain is Translation initiation factor IF-2 (881 aa).

2 disordered regions span residues 53 to 92 (RSHGKPEQAPEESDQSAKKITLNRRKQQEVTVNSGRSKTT) and 163 to 292 (AEAE…FERP). Polar residues predominate over residues 81-92 (EVTVNSGRSKTT). Residues 172 to 186 (EAAAAAKAAEALAAA) are compositionally biased toward low complexity. Residues 219 to 236 (RNDDRNNRSAPRNERGPG) show a composition bias toward basic and acidic residues. Over residues 254–263 (GNSNNSNTRG) the composition is skewed to low complexity. The region spanning 380 to 549 (QRPPVVTIMG…SIQAELLELK (170 aa)) is the tr-type G domain. A G1 region spans residues 389-396 (GHVDHGKT). GTP is bound at residue 389–396 (GHVDHGKT). Positions 414-418 (GITQH) are G2. The tract at residues 435–438 (DTPG) is G3. Residues 435–439 (DTPGH) and 489–492 (NKID) contribute to the GTP site. The G4 stretch occupies residues 489–492 (NKID). Residues 525–527 (SAK) are G5.

It belongs to the TRAFAC class translation factor GTPase superfamily. Classic translation factor GTPase family. IF-2 subfamily.

It localises to the cytoplasm. Its function is as follows. One of the essential components for the initiation of protein synthesis. Protects formylmethionyl-tRNA from spontaneous hydrolysis and promotes its binding to the 30S ribosomal subunits. Also involved in the hydrolysis of GTP during the formation of the 70S ribosomal complex. The polypeptide is Translation initiation factor IF-2 (Stenotrophomonas maltophilia (strain K279a)).